Consider the following 194-residue polypeptide: Peptidyl-tRNA hydrolase (194 aa).

A tRNA-binding site is contributed by tyrosine 16. Histidine 21 serves as the catalytic Proton acceptor. TRNA is bound by residues phenylalanine 67, asparagine 69, and asparagine 115.

Belongs to the PTH family. In terms of assembly, monomer.

It is found in the cytoplasm. The catalysed reaction is an N-acyl-L-alpha-aminoacyl-tRNA + H2O = an N-acyl-L-amino acid + a tRNA + H(+). Hydrolyzes ribosome-free peptidyl-tRNAs (with 1 or more amino acids incorporated), which drop off the ribosome during protein synthesis, or as a result of ribosome stalling. In terms of biological role, catalyzes the release of premature peptidyl moieties from peptidyl-tRNA molecules trapped in stalled 50S ribosomal subunits, and thus maintains levels of free tRNAs and 50S ribosomes. The protein is Peptidyl-tRNA hydrolase of Salmonella heidelberg (strain SL476).